A 349-amino-acid polypeptide reads, in one-letter code: Ion-translocating oxidoreductase complex subunit D (349 aa).

The next 3 membrane-spanning stretches (helical) occupy residues 36 to 56, 77 to 99, and 124 to 144; these read CAFFGWGTLIQVLLAIIVALS, SAMLTAILIGVAIPPLAPWWMIV, and AMAAYVLLLVSFPVQMTSWIA. An FMN phosphoryl threonine modification is found at Thr185. Transmembrane regions (helical) follow at residues 212-232, 239-259, 265-285, 291-311, and 315-335; these read GTGVGWFWVNLAYLAGGLVLL, WHISTGVLAGLFVASSIGFLL, ASPLFHLFSGATMLAAFFIAT, ATSPRGRLIFGALIGVLVYVI, and GGYPDAFAFAVLLANLCAPFI.

The protein belongs to the NqrB/RnfD family. As to quaternary structure, the complex is composed of six subunits: RnfA, RnfB, RnfC, RnfD, RnfE and RnfG. The cofactor is FMN.

It localises to the cell inner membrane. Its function is as follows. Part of a membrane-bound complex that couples electron transfer with translocation of ions across the membrane. The protein is Ion-translocating oxidoreductase complex subunit D of Shewanella sp. (strain MR-4).